A 298-amino-acid polypeptide reads, in one-letter code: Acetyl-coenzyme A carboxylase carboxyl transferase subunit beta (298 aa).

The tract at residues 1–21 is disordered; the sequence is MNQEVKSGKVLSPSTPWTQRP. One can recognise a CoA carboxyltransferase N-terminal domain in the interval 41–298; that stretch reads PTIECPECHA…RLVSKLMNLP (258 aa). The Zn(2+) site is built by Cys-45, Cys-48, Cys-64, and Cys-67. The C4-type zinc-finger motif lies at 45-67; it reads CPECHALVTRTAISFNAYVCPQC.

It belongs to the AccD/PCCB family. Acetyl-CoA carboxylase is a heterohexamer composed of biotin carboxyl carrier protein (AccB), biotin carboxylase (AccC) and two subunits each of ACCase subunit alpha (AccA) and ACCase subunit beta (AccD). It depends on Zn(2+) as a cofactor.

Its subcellular location is the cytoplasm. The catalysed reaction is N(6)-carboxybiotinyl-L-lysyl-[protein] + acetyl-CoA = N(6)-biotinyl-L-lysyl-[protein] + malonyl-CoA. Its pathway is lipid metabolism; malonyl-CoA biosynthesis; malonyl-CoA from acetyl-CoA: step 1/1. Functionally, component of the acetyl coenzyme A carboxylase (ACC) complex. Biotin carboxylase (BC) catalyzes the carboxylation of biotin on its carrier protein (BCCP) and then the CO(2) group is transferred by the transcarboxylase to acetyl-CoA to form malonyl-CoA. This Acinetobacter baumannii (strain AYE) protein is Acetyl-coenzyme A carboxylase carboxyl transferase subunit beta.